Consider the following 88-residue polypeptide: MALLDFFLSRKKNTANIAKERLQIIVAERRRSDAEPHYLPQLRKDILDVICKYVQIDPEMVTVQLEQKDGDISILELNVTLPEAEELK.

It belongs to the MinE family.

Prevents the cell division inhibition by proteins MinC and MinD at internal division sites while permitting inhibition at polar sites. This ensures cell division at the proper site by restricting the formation of a division septum at the midpoint of the long axis of the cell. This Escherichia fergusonii (strain ATCC 35469 / DSM 13698 / CCUG 18766 / IAM 14443 / JCM 21226 / LMG 7866 / NBRC 102419 / NCTC 12128 / CDC 0568-73) protein is Cell division topological specificity factor.